A 608-amino-acid polypeptide reads, in one-letter code: DNA mismatch repair protein MutL (608 aa).

This sequence belongs to the DNA mismatch repair MutL/HexB family.

Its function is as follows. This protein is involved in the repair of mismatches in DNA. It is required for dam-dependent methyl-directed DNA mismatch repair. May act as a 'molecular matchmaker', a protein that promotes the formation of a stable complex between two or more DNA-binding proteins in an ATP-dependent manner without itself being part of a final effector complex. The chain is DNA mismatch repair protein MutL from Anoxybacillus flavithermus (strain DSM 21510 / WK1).